The primary structure comprises 192 residues: MSSKEQKTPNEQVSEEMENTAEQQVEATQETGECVDPRVAELEVQLSDALQRERESLLRAKAEVENIRRRTELDVEKAHKFALERFSSELLPVIDNLERALDTADKTNTELISMIEGVELTLKSLLDAVGKFGIEVVGETHVPFNPEVHQAMTMLESADHEPNHVMMVMQKGYTLNGRLLRPAMVAVSKAKS.

The interval 1–34 (MSSKEQKTPNEQVSEEMENTAEQQVEATQETGEC) is disordered. Residues 20–31 (TAEQQVEATQET) are compositionally biased toward polar residues.

It belongs to the GrpE family. In terms of assembly, homodimer.

The protein resides in the cytoplasm. In terms of biological role, participates actively in the response to hyperosmotic and heat shock by preventing the aggregation of stress-denatured proteins, in association with DnaK and GrpE. It is the nucleotide exchange factor for DnaK and may function as a thermosensor. Unfolded proteins bind initially to DnaJ; upon interaction with the DnaJ-bound protein, DnaK hydrolyzes its bound ATP, resulting in the formation of a stable complex. GrpE releases ADP from DnaK; ATP binding to DnaK triggers the release of the substrate protein, thus completing the reaction cycle. Several rounds of ATP-dependent interactions between DnaJ, DnaK and GrpE are required for fully efficient folding. In Yersinia pestis, this protein is Protein GrpE.